Reading from the N-terminus, the 247-residue chain is Peroxisomal membrane protein 11A (247 aa).

Over 1-83 (MDAFIRFTNQ…SVRATDLVPR (83 aa)) the chain is Cytoplasmic. A helical membrane pass occupies residues 84 to 105 (ICLTLASLNRVIYFICDTVLFV). Topologically, residues 106-219 (RSTGLASGVN…DQLGIYKSNP (114 aa)) are lumenal. A helical transmembrane segment spans residues 220–239 (GIIGLGGLVSSVAGIITVAY). The interval 220–239 (GIIGLGGLVSSVAGIITVAY) is required for homodimerization, interaction with PEX11G, and peroxisomal localization. Over 240 to 247 (PQMKLKTQ) the chain is Cytoplasmic.

Belongs to the peroxin-11 family. In terms of assembly, homodimer. Heterodimer with PEX11G. Probably interacts with COPB2 and COPA. Interacts with PEX19. Interacts with FIS1.

Its subcellular location is the peroxisome membrane. Its function is as follows. May be involved in peroxisomal proliferation and may regulate peroxisomes division. May mediate binding of coatomer proteins to the peroxisomal membrane. Promotes membrane protrusion and elongation on the peroxisomal surface. The chain is Peroxisomal membrane protein 11A (PEX11A) from Bos taurus (Bovine).